The sequence spans 1838 residues: Lysine-specific demethylase 5 (1838 aa).

A disordered region spans residues 1 to 150 (MSAKTEADNT…SSNKFDQGKN (150 aa)). Residues 15–31 (SGGGGVGSGTSSGGGAS) are compositionally biased toward gly residues. Low complexity predominate over residues 45–56 (RNSTGNGTNSGS). The segment covering 136 to 145 (HTQPHSSNKF) has biased composition (polar residues). One can recognise a JmjN domain in the interval 161–202 (CPVFRPTTEEFKNPLAYISKIRSIAEKCGIAKILPPATWSPP). Positions 226–316 (TRVKLNFLDQ…ILHPFEVYTS (91 aa)) constitute an ARID domain. The span at 321–333 (GPTPTSSGSGSTP) shows a compositional bias: low complexity. Disordered regions lie at residues 321–380 (GPTP…GLSG) and 416–437 (GSPL…KGGE). Threonine 323 is modified (phosphothreonine). Composition is skewed to polar residues over residues 351 to 361 (TRQQIAPPNET), 369 to 380 (FGNSNASCGLSG), and 416 to 430 (GSPL…TRGA). The segment at 448–498 (KYICHICNRGDVEESMLLCDGCDDSYHTFCLLPPLTSIPKGEWLCPRCVVE) adopts a PHD-type 1 zinc-finger fold. A JmjC domain is found at 591 to 757 (EYAESSWNLN…MGRECVNHYS (167 aa)). Positions 637, 640, and 725 each coordinate Fe cation. Positions 960–1049 (VRTRSDHNQE…LRIELQQLDL (90 aa)) form a coiled coil. A PHD-type 2 zinc finger spans residues 1293 to 1354 (DMFCLCKSEF…KWLCPSCVRS (62 aa)). The disordered stretch occupies residues 1401 to 1462 (SSPDVSAAQE…SDADDDDDED (62 aa)). A compositionally biased stretch (low complexity) spans 1407 to 1417 (AAQEAIMAQQQ). A phosphoserine mark is found at serine 1422 and serine 1433. The span at 1453 to 1462 (SDADDDDDED) shows a compositional bias: acidic residues. Serine 1474 carries the phosphoserine modification. A disordered region spans residues 1548–1751 (YMQRQRQQHT…QRSQQAAQED (204 aa)). Low complexity-rich tracts occupy residues 1576–1595 (NSPN…SNSG), 1624–1650 (GKKG…PGAD), 1658–1667 (ANGGNTNSST), 1674–1683 (SATTTPTPGS), and 1692–1736 (STTA…ATGG). Phosphoserine is present on residues serine 1635 and serine 1640. A PHD-type 3 zinc finger spans residues 1753 to 1808 (EEECRAENCHKPTGREVDWVQCDGGCNEWFHMYCVGLNRSQIKPDDDYICIRCTKT). The segment at 1814–1838 (QGSGHSMSVASTTTPGKQRAVQSAR) is disordered.

Belongs to the JARID1 histone demethylase family. As to quaternary structure, interacts with Myc. Part of a complex containing Lid, Myc and Ash2. Requires Fe(2+) as cofactor.

It localises to the nucleus. The catalysed reaction is N(6),N(6),N(6)-trimethyl-L-lysyl(4)-[histone H3] + 3 2-oxoglutarate + 3 O2 = L-lysyl(4)-[histone H3] + 3 formaldehyde + 3 succinate + 3 CO2. Inhibited by Myc. Histone demethylase that specifically demethylates 'Lys-4' of histone H3, thereby playing a central role in histone code. Does not demethylate histone H3 'Lys-9', H3 'Lys-27', H3 'Lys-36', H3 'Lys-79' or H4 'Lys-20'. Specifically demethylates trimethylated H3 'Lys-4'. Required for the correct regulation of homeotic genes during development. Plays a role in the regulation of the circadian rhythm and in maintaining the normal periodicity of the circadian clock. Regulates the expression of clock-controlled genes including tim, per and cry. The chain is Lysine-specific demethylase 5 from Drosophila melanogaster (Fruit fly).